Reading from the N-terminus, the 339-residue chain is Replication factor C subunit 4 (339 aa).

49–56 is an ATP binding site; sequence GPPGTGKT.

Belongs to the activator 1 small subunits family. In terms of assembly, heterotetramer of subunits RFC2, RFC3, RFC4 and RFC5 that can form a complex with RFC1.

The protein localises to the nucleus. In terms of biological role, may be involved in DNA replication and thus regulate cell proliferation. In Arabidopsis thaliana (Mouse-ear cress), this protein is Replication factor C subunit 4 (RFC4).